Here is a 509-residue protein sequence, read N- to C-terminus: ATP synthase subunit alpha (509 aa).

169-176 (GDRQTGKT) serves as a coordination point for ATP.

Belongs to the ATPase alpha/beta chains family. As to quaternary structure, F-type ATPases have 2 components, CF(1) - the catalytic core - and CF(0) - the membrane proton channel. CF(1) has five subunits: alpha(3), beta(3), gamma(1), delta(1), epsilon(1). CF(0) has three main subunits: a(1), b(2) and c(9-12). The alpha and beta chains form an alternating ring which encloses part of the gamma chain. CF(1) is attached to CF(0) by a central stalk formed by the gamma and epsilon chains, while a peripheral stalk is formed by the delta and b chains.

Its subcellular location is the cell inner membrane. It carries out the reaction ATP + H2O + 4 H(+)(in) = ADP + phosphate + 5 H(+)(out). Produces ATP from ADP in the presence of a proton gradient across the membrane. The alpha chain is a regulatory subunit. This Agrobacterium fabrum (strain C58 / ATCC 33970) (Agrobacterium tumefaciens (strain C58)) protein is ATP synthase subunit alpha.